Here is a 248-residue protein sequence, read N- to C-terminus: PF03932 family protein CutC (248 aa).

Belongs to the CutC family. Homodimer.

It localises to the cytoplasm. The chain is PF03932 family protein CutC from Salmonella enteritidis PT4 (strain P125109).